Reading from the N-terminus, the 302-residue chain is Nucleotide-binding protein Strop_3101 (302 aa).

Residue 26-33 coordinates ATP; that stretch reads GVSGGGRS. 77 to 80 contacts GTP; that stretch reads DVRS.

This sequence belongs to the RapZ-like family.

In terms of biological role, displays ATPase and GTPase activities. The protein is Nucleotide-binding protein Strop_3101 of Salinispora tropica (strain ATCC BAA-916 / DSM 44818 / JCM 13857 / NBRC 105044 / CNB-440).